A 570-amino-acid polypeptide reads, in one-letter code: Interleukin-1 receptor accessory protein (570 aa).

A signal peptide spans 1-20 (MGLPWCLMSLFFCGILQSHA). 3 Ig-like C2-type domains span residues 21–128 (SERC…VAFP), 141–230 (PMRL…RTMT), and 243–348 (PHIY…AKVK). Residues 21-367 (SERCDDWGLD…VELACGFGAT (347 aa)) lie on the Extracellular side of the membrane. Intrachain disulfides connect Cys-24–Cys-122, Cys-47–Cys-114, Cys-137–Cys-181, Cys-160–Cys-212, and Cys-266–Cys-332. Asn-57 is a glycosylation site (N-linked (GlcNAc...) asparagine). Residues 69–85 (IWYWTRQDRDLEEPINF) are essential for interaction with PTPRD. 6 N-linked (GlcNAc...) asparagine glycosylation sites follow: Asn-107, Asn-111, Asn-118, Asn-157, Asn-196, and Asn-209. Residues 368 to 388 (VFLVVVLIVVYHVYWLEMVLF) traverse the membrane as a helical segment. At 389 to 570 (YRAHFGTDET…GLSYSSLKNV (182 aa)) the chain is on the cytoplasmic side. The region spanning 403–546 (KEYDIYVSYA…RFWKQLQVAM (144 aa)) is the TIR domain. Glu-482 is an active-site residue. The segment at 550 to 570 (KSPRWSSSDKQGLSYSSLKNV) is disordered. Polar residues predominate over residues 553-570 (RWSSSDKQGLSYSSLKNV). Ser-557 is subject to Phosphoserine.

This sequence belongs to the interleukin-1 receptor family. In terms of assembly, the interleukin-36 receptor complex is a heterodimer of IL1RL2 and IL1RAP; the association is inhibited by IL36RN. The interleukin-1 receptor complex is a heterodimer of IL1R1 and IL1RAP. Associates with IL1R2 to form a non-signaling interleukin-1 receptor complex. Interacts with IL-33-bound IL1RL1 to form the minimal interleukin-33 signaling complex with a 1:1:1 stoichiometry. Interacts with KIT (independently of stimulation with KITLG/SCF). A mast cell-specific KITLG/SCF-induced interleukin-33 signaling complex contains IL1RL1, IL1RAP, KIT and MYD88. Interacts (via the first immunoglobilin domain) with PTPRD (via the third immunoglobilin domain); induces pre- and postsynaptic differentiation of neurons. Highly expressed in hypothalamus, in the dentate gyrus of hippocampus, cerebral cortex, cerebellum, liver and lung.

The protein resides in the membrane. It carries out the reaction NAD(+) + H2O = ADP-D-ribose + nicotinamide + H(+). Functionally, coreceptor for IL1RL2 in the IL-36 signaling system. Coreceptor with IL1R1 in the IL-1 signaling system. Associates with IL1R1 bound to IL1B to form the high affinity interleukin-1 receptor complex which mediates interleukin-1-dependent activation of NF-kappa-B and other pathways. Signaling involves the recruitment of adapter molecules such as TOLLIP, MYD88, and IRAK1 or IRAK2 via the respective TIR domains of the receptor/coreceptor subunits. Recruits TOLLIP to the signaling complex. Does not bind to interleukin-1 alone; binding of IL1RN to IL1R1, prevents its association with IL1R1 to form a signaling complex. The cellular response is modulated through a non-signaling association with the membrane IL1R2 decoy receptor. Coreceptor for IL1RL1 in the IL-33 signaling system. Can bidirectionally induce pre- and postsynaptic differentiation of neurons by trans-synaptically binding to PTPRD. May play a role in IL1B-mediated costimulation of IFNG production from T-helper 1 (Th1) cells. The protein is Interleukin-1 receptor accessory protein (Il1rap) of Rattus norvegicus (Rat).